Consider the following 173-residue polypeptide: MSIILGIDPGSRITGYGVIRQNGRHLQYLGSGCIRMSEKELPGRLKQIYAGVSEIITQFQPDVFAIEQVFMSKNADSALKLGQARGSAIVAAVNADLPVYEYAARLIKQAVTGTGAADKAQVQHMVMTMLKLPARPQADAADGLGVAICHANTNKTLIALAGKATGARRGRYR.

Active-site residues include Asp-8, Glu-67, and Asp-139. 3 residues coordinate Mg(2+): Asp-8, Glu-67, and Asp-139.

This sequence belongs to the RuvC family. In terms of assembly, homodimer which binds Holliday junction (HJ) DNA. The HJ becomes 2-fold symmetrical on binding to RuvC with unstacked arms; it has a different conformation from HJ DNA in complex with RuvA. In the full resolvosome a probable DNA-RuvA(4)-RuvB(12)-RuvC(2) complex forms which resolves the HJ. Mg(2+) is required as a cofactor.

It is found in the cytoplasm. It catalyses the reaction Endonucleolytic cleavage at a junction such as a reciprocal single-stranded crossover between two homologous DNA duplexes (Holliday junction).. Functionally, the RuvA-RuvB-RuvC complex processes Holliday junction (HJ) DNA during genetic recombination and DNA repair. Endonuclease that resolves HJ intermediates. Cleaves cruciform DNA by making single-stranded nicks across the HJ at symmetrical positions within the homologous arms, yielding a 5'-phosphate and a 3'-hydroxyl group; requires a central core of homology in the junction. The consensus cleavage sequence is 5'-(A/T)TT(C/G)-3'. Cleavage occurs on the 3'-side of the TT dinucleotide at the point of strand exchange. HJ branch migration catalyzed by RuvA-RuvB allows RuvC to scan DNA until it finds its consensus sequence, where it cleaves and resolves the cruciform DNA. The chain is Crossover junction endodeoxyribonuclease RuvC from Aliivibrio salmonicida (strain LFI1238) (Vibrio salmonicida (strain LFI1238)).